The chain runs to 217 residues: Small ribosomal subunit protein uS3c (217 aa).

Residues 43-117 (IKNYVQKNRK…KLNIAITRIA (75 aa)) enclose the KH type-2 domain.

This sequence belongs to the universal ribosomal protein uS3 family. Part of the 30S ribosomal subunit.

The protein resides in the plastid. Its subcellular location is the chloroplast. The sequence is that of Small ribosomal subunit protein uS3c (rps3) from Ranunculus macranthus (Large buttercup).